Reading from the N-terminus, the 624-residue chain is tRNA uridine 5-carboxymethylaminomethyl modification enzyme MnmG (624 aa).

Residues 14 to 19 (GGGHAG), valine 126, and serine 181 contribute to the FAD site. An NAD(+)-binding site is contributed by 273–287 (GPRYCPSIEDKVVRF). Residue glutamine 370 participates in FAD binding.

Belongs to the MnmG family. As to quaternary structure, homodimer. Heterotetramer of two MnmE and two MnmG subunits. The cofactor is FAD.

Its subcellular location is the cytoplasm. Functionally, NAD-binding protein involved in the addition of a carboxymethylaminomethyl (cmnm) group at the wobble position (U34) of certain tRNAs, forming tRNA-cmnm(5)s(2)U34. The polypeptide is tRNA uridine 5-carboxymethylaminomethyl modification enzyme MnmG (Geotalea uraniireducens (strain Rf4) (Geobacter uraniireducens)).